A 239-amino-acid chain; its full sequence is Uridylate kinase (239 aa).

Lysine 13–glycine 16 provides a ligand contact to ATP. Glycine 55 is a binding site for UMP. Residues glycine 56 and arginine 60 each contribute to the ATP site. UMP contacts are provided by residues aspartate 75 and threonine 136 to threonine 143. ATP contacts are provided by threonine 163, glutamine 164, tyrosine 169, and aspartate 172.

Belongs to the UMP kinase family. Homohexamer.

It is found in the cytoplasm. It catalyses the reaction UMP + ATP = UDP + ADP. The protein operates within pyrimidine metabolism; CTP biosynthesis via de novo pathway; UDP from UMP (UMPK route): step 1/1. With respect to regulation, inhibited by UTP. Catalyzes the reversible phosphorylation of UMP to UDP. The chain is Uridylate kinase from Bartonella quintana (strain Toulouse) (Rochalimaea quintana).